Reading from the N-terminus, the 488-residue chain is Inosine-5'-monophosphate dehydrogenase (488 aa).

CBS domains are found at residues 95-153 and 157-216; these read VISN…SIKI and MTQE…AKDE. NAD(+) contacts are provided by residues aspartate 250 and 300–302; that span reads GIG. K(+)-binding residues include glycine 302 and glycine 304. Serine 305 lines the IMP pocket. K(+) is bound at residue cysteine 307. Cysteine 307 functions as the Thioimidate intermediate in the catalytic mechanism. IMP contacts are provided by residues 340–342, 363–364, and 387–391; these read DGG, GS, and YRGMG. The active-site Proton acceptor is the arginine 403. Glutamate 417 serves as a coordination point for IMP. Residues 468 to 488 are disordered; the sequence is GLAESHPHNIQITKESPNYSF. Glutamate 471, serine 472, and histidine 473 together coordinate K(+). Residues 475 to 488 are compositionally biased toward polar residues; that stretch reads HNIQITKESPNYSF.

The protein belongs to the IMPDH/GMPR family. Homotetramer. The cofactor is K(+).

The catalysed reaction is IMP + NAD(+) + H2O = XMP + NADH + H(+). It functions in the pathway purine metabolism; XMP biosynthesis via de novo pathway; XMP from IMP: step 1/1. Mycophenolic acid (MPA) is a non-competitive inhibitor that prevents formation of the closed enzyme conformation by binding to the same site as the amobile flap. In contrast, mizoribine monophosphate (MZP) is a competitive inhibitor that induces the closed conformation. MPA is a potent inhibitor of mammalian IMPDHs but a poor inhibitor of the bacterial enzymes. MZP is a more potent inhibitor of bacterial IMPDH. Functionally, catalyzes the conversion of inosine 5'-phosphate (IMP) to xanthosine 5'-phosphate (XMP), the first committed and rate-limiting step in the de novo synthesis of guanine nucleotides, and therefore plays an important role in the regulation of cell growth. In Staphylococcus aureus (strain Mu50 / ATCC 700699), this protein is Inosine-5'-monophosphate dehydrogenase.